A 388-amino-acid polypeptide reads, in one-letter code: Succinate--CoA ligase [ADP-forming] subunit beta (388 aa).

One can recognise an ATP-grasp domain in the interval 9-244 (KQLFAEYGLP…PSQEDSREAE (236 aa)). ATP-binding positions include K46, 53–55 (GRG), E99, T102, and E107. Mg(2+) contacts are provided by N199 and D213. Residues N264 and 321–323 (GIV) each bind substrate.

This sequence belongs to the succinate/malate CoA ligase beta subunit family. In terms of assembly, heterotetramer of two alpha and two beta subunits. Requires Mg(2+) as cofactor.

It carries out the reaction succinate + ATP + CoA = succinyl-CoA + ADP + phosphate. The catalysed reaction is GTP + succinate + CoA = succinyl-CoA + GDP + phosphate. The protein operates within carbohydrate metabolism; tricarboxylic acid cycle; succinate from succinyl-CoA (ligase route): step 1/1. In terms of biological role, succinyl-CoA synthetase functions in the citric acid cycle (TCA), coupling the hydrolysis of succinyl-CoA to the synthesis of either ATP or GTP and thus represents the only step of substrate-level phosphorylation in the TCA. The beta subunit provides nucleotide specificity of the enzyme and binds the substrate succinate, while the binding sites for coenzyme A and phosphate are found in the alpha subunit. The sequence is that of Succinate--CoA ligase [ADP-forming] subunit beta from Marinobacter nauticus (strain ATCC 700491 / DSM 11845 / VT8) (Marinobacter aquaeolei).